The following is a 151-amino-acid chain: Sec-independent protein translocase protein TatB (151 aa).

Residues 1–21 (MFGMSLPEIIIIAVIAVIFLG) form a helical membrane-spanning segment. Residues 120–131 (NNDPLNNETLNE) show a composition bias toward low complexity. A disordered region spans residues 120–151 (NNDPLNNETLNEQPSKPSPNLNLENKEIKKEA). The span at 132-142 (QPSKPSPNLNL) shows a compositional bias: polar residues.

This sequence belongs to the TatB family. As to quaternary structure, the Tat system comprises two distinct complexes: a TatABC complex, containing multiple copies of TatA, TatB and TatC subunits, and a separate TatA complex, containing only TatA subunits. Substrates initially bind to the TatABC complex, which probably triggers association of the separate TatA complex to form the active translocon.

It localises to the cell inner membrane. Functionally, part of the twin-arginine translocation (Tat) system that transports large folded proteins containing a characteristic twin-arginine motif in their signal peptide across membranes. Together with TatC, TatB is part of a receptor directly interacting with Tat signal peptides. TatB may form an oligomeric binding site that transiently accommodates folded Tat precursor proteins before their translocation. The sequence is that of Sec-independent protein translocase protein TatB from Campylobacter fetus subsp. fetus (strain 82-40).